We begin with the raw amino-acid sequence, 233 residues long: Transcriptional regulatory protein NatR (233 aa).

One can recognise a Response regulatory domain in the interval 3–117; it reads KVGLVDDYRV…RLAASFDRYL (115 aa). Asp-54 is subject to 4-aspartylphosphate. The HTH LytTR-type domain occupies 129-233; that stretch reads ILIKQKSEMH…QLDYFQNYYF (105 aa).

Post-translationally, phosphorylated by NatK.

Its subcellular location is the cytoplasm. Member of the two-component regulatory system NatK/NatR that positively regulates the expression of the natAB operon. Acts by binding directly to the promoter of natAB. This Bacillus subtilis (strain 168) protein is Transcriptional regulatory protein NatR.